We begin with the raw amino-acid sequence, 216 residues long: Large ribosomal subunit protein uL4 (216 aa).

Residues 51 to 78 form a disordered region; that stretch reads KGRSEVHGSNTKPYKQKGTGRARRGDKK. A compositionally biased stretch (basic residues) spans 64–76; the sequence is YKQKGTGRARRGD.

The protein belongs to the universal ribosomal protein uL4 family. In terms of assembly, part of the 50S ribosomal subunit.

One of the primary rRNA binding proteins, this protein initially binds near the 5'-end of the 23S rRNA. It is important during the early stages of 50S assembly. It makes multiple contacts with different domains of the 23S rRNA in the assembled 50S subunit and ribosome. Functionally, forms part of the polypeptide exit tunnel. The chain is Large ribosomal subunit protein uL4 from Treponema pallidum (strain Nichols).